We begin with the raw amino-acid sequence, 108 residues long: BH3-like motif-containing cell death inducer (108 aa).

The short motif at 5–12 (LPIEGQEI) is the BH3-like element.

Ubiquitously expressed.

The protein resides in the cytoplasm. It is found in the mitochondrion. Functions as a proapoptotic molecule through the caspase-dependent mitochondrial pathway of cell death. This is BH3-like motif-containing cell death inducer (BLID) from Homo sapiens (Human).